The primary structure comprises 917 residues: DNA topoisomerase 1 beta (917 aa).

The tract at residues 1–368 is disordered; the sequence is MATEAFVKPV…SLPSGDGQKK (368 aa). A compositionally biased stretch (polar residues) spans 32–63; it reads RNSNTAATTNRPSPINNAMRNSAIGSTKSSPP. The span at 66 to 82 shows a compositional bias: low complexity; the sequence is SPLTSPNRSASSSTRSS. Positions 89 to 100 are enriched in polar residues; the sequence is PSSSSVQRSTLK. Composition is skewed to basic and acidic residues over residues 102–116 and 134–149; these read PLRD…ERNG and DKPL…KEVT. A compositionally biased stretch (polar residues) spans 150–170; it reads KQPSSSGRGSTQQAVQKSNMR. Positions 177–187 are enriched in basic and acidic residues; the sequence is YTKKKVLDERA. A compositionally biased stretch (polar residues) spans 189-205; sequence MSSTVQTKTSVGTSSSK. Composition is skewed to basic and acidic residues over residues 256-265 and 296-307; these read KLSEPARPVK and VKEDNSDGDDHV. At S301 the chain carries Phosphoserine. Low complexity predominate over residues 316–338; that stretch reads DSSNNKSSSAKPSSSKMIASSSR. Interaction with DNA stretches follow at residues 575-576, 638-643, and 729-731; these read KY, RAGNEK, and TAK. The Topo IB-type catalytic domain occupies 582–912; the sequence is SSSLKGQSDK…MDVDPEFRFC (331 aa). Residues 779 to 858 adopt a coiled-coil conformation; that stretch reads VSKSHGAQVE…ERDMQTKEDM (80 aa). Y870 functions as the O-(3'-phospho-DNA)-tyrosine intermediate in the catalytic mechanism.

This sequence belongs to the type IB topoisomerase family.

The protein localises to the nucleus. The enzyme catalyses ATP-independent breakage of single-stranded DNA, followed by passage and rejoining.. Functionally, releases the supercoiling and torsional tension of DNA introduced during the DNA replication and transcription by transiently cleaving and rejoining one strand of the DNA duplex. Introduces a single-strand break via transesterification at a target site in duplex DNA. The scissile phosphodiester is attacked by the catalytic tyrosine of the enzyme, resulting in the formation of a DNA-(3'-phosphotyrosyl)-enzyme intermediate and the expulsion of a 5'-OH DNA strand. The free DNA strand then rotates around the intact phosphodiester bond on the opposing strand, thus removing DNA supercoils. Finally, in the religation step, the DNA 5'-OH attacks the covalent intermediate to expel the active-site tyrosine and restore the DNA phosphodiester backbone. Topoisomerases 1 enzymes (TOP1A and TOP1B) are essential for plant survival. In Arabidopsis thaliana (Mouse-ear cress), this protein is DNA topoisomerase 1 beta.